A 366-amino-acid chain; its full sequence is Peptide chain release factor 1 (366 aa).

At Q230 the chain carries N5-methylglutamine. Composition is skewed to basic and acidic residues over residues 283 to 293 and 315 to 328; these read ARDAQEARDRA and VTDH…KNHP. The disordered stretch occupies residues 283–335; the sequence is ARDAQEARDRAAQVGSGERSEKIRTYNYPQNRVTDHRLEGDSKNHPLDSVMAG.

This sequence belongs to the prokaryotic/mitochondrial release factor family. In terms of processing, methylated by PrmC. Methylation increases the termination efficiency of RF1.

Its subcellular location is the cytoplasm. Its function is as follows. Peptide chain release factor 1 directs the termination of translation in response to the peptide chain termination codons UAG and UAA. The sequence is that of Peptide chain release factor 1 from Deinococcus deserti (strain DSM 17065 / CIP 109153 / LMG 22923 / VCD115).